The sequence spans 88 residues: Small ribosomal subunit protein bS16 (88 aa).

Belongs to the bacterial ribosomal protein bS16 family.

The protein is Small ribosomal subunit protein bS16 of Leptospira borgpetersenii serovar Hardjo-bovis (strain L550).